Consider the following 198-residue polypeptide: V-type ATP synthase subunit E (198 aa).

This sequence belongs to the V-ATPase E subunit family.

Produces ATP from ADP in the presence of a proton gradient across the membrane. This Clostridium perfringens (strain ATCC 13124 / DSM 756 / JCM 1290 / NCIMB 6125 / NCTC 8237 / Type A) protein is V-type ATP synthase subunit E.